The primary structure comprises 180 residues: Large ribosomal subunit protein uL5 (180 aa).

It belongs to the universal ribosomal protein uL5 family. Part of the 50S ribosomal subunit; part of the 5S rRNA/L5/L18/L25 subcomplex. Contacts the 5S rRNA and the P site tRNA. Forms a bridge to the 30S subunit in the 70S ribosome.

Functionally, this is one of the proteins that bind and probably mediate the attachment of the 5S RNA into the large ribosomal subunit, where it forms part of the central protuberance. In the 70S ribosome it contacts protein S13 of the 30S subunit (bridge B1b), connecting the 2 subunits; this bridge is implicated in subunit movement. Contacts the P site tRNA; the 5S rRNA and some of its associated proteins might help stabilize positioning of ribosome-bound tRNAs. This chain is Large ribosomal subunit protein uL5, found in Oenococcus oeni (strain ATCC BAA-331 / PSU-1).